Consider the following 908-residue polypeptide: 26S proteasome non-ATPase regulatory subunit 2 (908 aa).

Met-1 carries the N-acetylmethionine modification. Residues 1–52 (MEEGGRDKAPVQPQQSPAAALGGTDEKPSGKERRDAGDKDKEQELSEEDKQL) form a disordered region. Residues 10–20 (PVQPQQSPAAA) are compositionally biased toward low complexity. The residue at position 16 (Ser-16) is a Phosphoserine. Thr-24 carries the post-translational modification Phosphothreonine. The segment covering 24–52 (TDEKPSGKERRDAGDKDKEQELSEEDKQL) has biased composition (basic and acidic residues). Phosphoserine is present on residues Ser-29 and Ser-147. Tyr-194 is modified (phosphotyrosine). Phosphoserine is present on residues Ser-361 and Ser-363. PC repeat units follow at residues 409–442 (SAAASLGMILLWDVDGGLTQIDKYLYSSEDYIKS), 443–479 (GALLACGIVNSGVRNECDPALALLSDYVLHNSNTMRL), 480–514 (GSIFGLGLAYAGSNREDVLTLLLPVMGDSKSSMEV), 517–551 (VTALACGMIAVGSCNGDVTSTILQTIMEKSETELK), and 560–589 (LGLGLNHLGKGEAIEAILAALEVVSEPFRS). An N6-acetyllysine modification is found at Lys-551. Basic and acidic residues predominate over residues 623–643 (KEKEEDKDKKEKKDKDKKEAP). Residues 623–645 (KEKEEDKDKKEKKDKDKKEAPAD) are disordered. PC repeat units lie at residues 692–723 (LALALISVSNPRLNILDTLSKFSHDADPEVSY) and 742–757 (AAMLRQLAQYHAKDPN). Positions 708-903 (DTLSKFSHDA…LEGFVILRKN (196 aa)) are required for interaction with UBLCP1.

This sequence belongs to the proteasome subunit S2 family. Component of the 19S proteasome regulatory particle complex. The 26S proteasome consists of a 20S core particle (CP) and two 19S regulatory subunits (RP). The regulatory particle is made of a lid composed of 9 subunits, a base containing 6 ATPases and few additional components including PSMD2. Interacts with RPGRIP1L. Interacts with CRY1 in a KDM8-dependent manner. Interacts (via C-terminus) with phosphatase UBLCP1 (via ubiquitin-like domain); the interaction recruits UBLCP1 to the 19S regulatory particle where it dephosphorylates 19S subunit PSMC2/RPT1 which impairs PSMC2 ATPase activity and disrupts 26S proteasome assembly.

Functionally, component of the 26S proteasome, a multiprotein complex involved in the ATP-dependent degradation of ubiquitinated proteins. This complex plays a key role in the maintenance of protein homeostasis by removing misfolded or damaged proteins, which could impair cellular functions, and by removing proteins whose functions are no longer required. Therefore, the proteasome participates in numerous cellular processes, including cell cycle progression, apoptosis, or DNA damage repair. In terms of biological role, binds to the intracellular domain of tumor necrosis factor type 1 receptor. The binding domain of TRAP1 and TRAP2 resides outside the death domain of TNFR1. The protein is 26S proteasome non-ATPase regulatory subunit 2 (PSMD2) of Pongo abelii (Sumatran orangutan).